Consider the following 350-residue polypeptide: Biotin synthase (350 aa).

The Radical SAM core domain occupies 63–281 (GDIELATLLS…IAVARITMPK (219 aa)). [4Fe-4S] cluster contacts are provided by Cys78, Cys82, and Cys85. Residues Cys122, Cys153, Cys213, and Arg285 each coordinate [2Fe-2S] cluster.

Belongs to the radical SAM superfamily. Biotin synthase family. As to quaternary structure, homodimer. Requires [4Fe-4S] cluster as cofactor. [2Fe-2S] cluster serves as cofactor.

It catalyses the reaction (4R,5S)-dethiobiotin + (sulfur carrier)-SH + 2 reduced [2Fe-2S]-[ferredoxin] + 2 S-adenosyl-L-methionine = (sulfur carrier)-H + biotin + 2 5'-deoxyadenosine + 2 L-methionine + 2 oxidized [2Fe-2S]-[ferredoxin]. The protein operates within cofactor biosynthesis; biotin biosynthesis; biotin from 7,8-diaminononanoate: step 2/2. In terms of biological role, catalyzes the conversion of dethiobiotin (DTB) to biotin by the insertion of a sulfur atom into dethiobiotin via a radical-based mechanism. This is Biotin synthase from Acidovorax ebreus (strain TPSY) (Diaphorobacter sp. (strain TPSY)).